The sequence spans 202 residues: Protein-methionine-sulfoxide reductase heme-binding subunit MsrQ (202 aa).

6 helical membrane-spanning segments follow: residues 8-28 (LAVF…AWIF), 42-62 (LGLG…LQKL), 75-95 (LGLW…VFIL), 110-130 (PYII…ITSN), 147-167 (LVYL…RADL), and 169-189 (EWTL…PSIA).

Belongs to the MsrQ family. As to quaternary structure, heterodimer of a catalytic subunit (MsrP) and a heme-binding subunit (MsrQ). FMN is required as a cofactor. It depends on heme b as a cofactor.

Its subcellular location is the cell inner membrane. In terms of biological role, part of the MsrPQ system that repairs oxidized periplasmic proteins containing methionine sulfoxide residues (Met-O), using respiratory chain electrons. Thus protects these proteins from oxidative-stress damage caused by reactive species of oxygen and chlorine generated by the host defense mechanisms. MsrPQ is essential for the maintenance of envelope integrity under bleach stress, rescuing a wide series of structurally unrelated periplasmic proteins from methionine oxidation. MsrQ provides electrons for reduction to the reductase catalytic subunit MsrP, using the quinone pool of the respiratory chain. The chain is Protein-methionine-sulfoxide reductase heme-binding subunit MsrQ from Pseudomonas paraeruginosa (strain DSM 24068 / PA7) (Pseudomonas aeruginosa (strain PA7)).